The primary structure comprises 186 residues: Tumor necrosis factor alpha-induced protein 8-like protein 1 (186 aa).

The protein belongs to the TNFAIP8 family.

It localises to the cytoplasm. The protein is Tumor necrosis factor alpha-induced protein 8-like protein 1 (TNFAIP8L1) of Gallus gallus (Chicken).